A 794-amino-acid polypeptide reads, in one-letter code: MRVDYDVAAALRHEGLKPHDYDEICRRLQRAPNRVELGMFGVMWSEHCCYRNSRPLLSSFPTSGHRILVGPGENAGVVDLGDGQSLAFKIESHNHPSALEPFQGAATGVGGILRDIFTMGARPIALLNALRFGPLEDERNVGLMEGVVEGIAHYGNCVGVPTVGGEVAFDSSYSGNPLVNAMALGLMETDEIVCSGAHGVGYPVIYVGSTTGRDGMGGASFASAELTKASLDDRPAVQVGDPFLEKGLIEACLEAFKSGDVVAAQDMGAAGLTCSCSEMAAKGGLGIELDLDRVPARELGMTPYEFLLSESQERMLFVVKPGQEQSLMERFIRWGLQAAIVGCVLEEKVVRVLQKGEVVAEVPANALADDTPIDRHELVSDPPLEIQAKWDWQENLLPVVGLKGINLNSQSHFGSNISWDEILLKLLDDPTIASKRWVYRQYDHQVQANTVSAPGVSDAAVVRLRPQQGKGSVDEVKRGVAAVVDCPNRWVFLDPERGAMAAVAEAARNLSCVGAEPLAVTDNLNFPSPETPTGYWQLALACRGLSKACKTFSTPVTGGNVSLYNETRLADGKIQPIHPTPVVGMVGLVHNLVNVCGQAWLEPGDLIWLLGVPIDTTVAVDPRVSLAGSSYLECIHGLVTGRPPEIDLKLECLVQSFLRNSITEGFVRSAHDLSDGGLAVAVAECCIAANLGAHIELPSSDARLDRLLFAEGGSRILVSVPSTQAVAWQKVLNQAKTTAPGSVFDQYLGVVTADDELLITQAGNRLVQLPLNQLRECFEQAIPRRMGLDLSSSV.

His-47 is a catalytic residue. ATP contacts are provided by Tyr-50 and Lys-89. Glu-91 contributes to the Mg(2+) binding site. Residues 92-95 and Arg-114 contribute to the substrate site; that span reads SHNH. The active-site Proton acceptor is His-93. Asp-115 is a Mg(2+) binding site. Gln-238 is a substrate binding site. Position 266 (Asp-266) interacts with Mg(2+). 310 to 312 is a binding site for substrate; sequence ESQ. ATP-binding residues include Asp-522 and Gly-559. Asn-560 contributes to the Mg(2+) binding site. Residue Ser-562 participates in substrate binding.

The protein belongs to the FGAMS family. In terms of assembly, monomer. Part of the FGAM synthase complex composed of 1 PurL, 1 PurQ and 2 PurS subunits.

It localises to the cytoplasm. It carries out the reaction N(2)-formyl-N(1)-(5-phospho-beta-D-ribosyl)glycinamide + L-glutamine + ATP + H2O = 2-formamido-N(1)-(5-O-phospho-beta-D-ribosyl)acetamidine + L-glutamate + ADP + phosphate + H(+). It functions in the pathway purine metabolism; IMP biosynthesis via de novo pathway; 5-amino-1-(5-phospho-D-ribosyl)imidazole from N(2)-formyl-N(1)-(5-phospho-D-ribosyl)glycinamide: step 1/2. In terms of biological role, part of the phosphoribosylformylglycinamidine synthase complex involved in the purines biosynthetic pathway. Catalyzes the ATP-dependent conversion of formylglycinamide ribonucleotide (FGAR) and glutamine to yield formylglycinamidine ribonucleotide (FGAM) and glutamate. The FGAM synthase complex is composed of three subunits. PurQ produces an ammonia molecule by converting glutamine to glutamate. PurL transfers the ammonia molecule to FGAR to form FGAM in an ATP-dependent manner. PurS interacts with PurQ and PurL and is thought to assist in the transfer of the ammonia molecule from PurQ to PurL. The sequence is that of Phosphoribosylformylglycinamidine synthase subunit PurL from Prochlorococcus marinus (strain MIT 9313).